A 514-amino-acid polypeptide reads, in one-letter code: Photosystem II CP47 reaction center protein (514 aa).

Transmembrane regions (helical) follow at residues 21-36 (AVHLMHTALVLGWAGS), 109-123 (IVLSGLFFLAAVWHW), 148-164 (GGHLFLLGFLCFNFGTF), 211-226 (IAAGITLMIGGVFHLT), 245-260 (ALASAIAAVFGAAFVV), and 465-480 (CFALLFFFGHIWHGAR).

Belongs to the PsbB/PsbC family. PsbB subfamily. In terms of assembly, PSII is composed of 1 copy each of membrane proteins PsbA, PsbB, PsbC, PsbD, PsbE, PsbF, PsbH, PsbI, PsbJ, PsbK, PsbL, PsbM, PsbT, PsbX, PsbY, PsbZ, Psb30/Ycf12, peripheral proteins PsbO, CyanoQ (PsbQ), PsbU, PsbV and a large number of cofactors. It forms dimeric complexes. It depends on Binds multiple chlorophylls. PSII binds additional chlorophylls, carotenoids and specific lipids. as a cofactor.

The protein resides in the cellular thylakoid membrane. Its function is as follows. One of the components of the core complex of photosystem II (PSII). It binds chlorophyll and helps catalyze the primary light-induced photochemical processes of PSII. PSII is a light-driven water:plastoquinone oxidoreductase, using light energy to abstract electrons from H(2)O, generating O(2) and a proton gradient subsequently used for ATP formation. The sequence is that of Photosystem II CP47 reaction center protein from Prochlorothrix hollandica.